The primary structure comprises 142 residues: HTH-type transcriptional regulator MntR (142 aa).

Residues 1–63 (MPTPSMEDYI…YEKYRGLILT (63 aa)) enclose the HTH dtxR-type domain. Mn(2+) is bound by residues D8, E11, H77, E99, E102, and H103.

Belongs to the DtxR/MntR family. Homodimer.

Its subcellular location is the cytoplasm. DNA binding is strongly activated by Mn(2+). In terms of biological role, central regulator of manganese homeostasis. The sequence is that of HTH-type transcriptional regulator MntR from Listeria monocytogenes serotype 4b (strain F2365).